The primary structure comprises 359 residues: MILNSSTEDGIKRIQDDCPKAGRHNYIFVMIPTLYSIIFVVGIFGNSLVVIVIYFYMKLKTVASVFLLNLALADLCFLLTLPLWAVYTAMEYRWPFGNYLCKIASASVSFNLYASVFLLTCLSIDRYVAIVHPMKSPVRRTMLMAKVTCIIIWLLAGLASLPTIIHRNVFFIENTNITVCAFHYESQNSTLPIGLGLTKNILGFLFPFLIILTSYTLIWKTLKRAYEIQKNKPRNDDIFKIIMAIVLFFFFSWVPHQIFTFLDVLIQLGIIHDCKIADIVDTAMPITICIAYFNNCLNPLFYGFLGKKFKKYFLQLLKYIPPKAKSHSSLSTKMSTLSYRPSDHGNASTKKSASCVEVE.

Residues 1–25 (MILNSSTEDGIKRIQDDCPKAGRHN) are Extracellular-facing. Residue asparagine 4 is glycosylated (N-linked (GlcNAc...) asparagine). Angiotensin II is bound by residues glutamine 15 and aspartate 17. Cystine bridges form between cysteine 18/cysteine 274 and cysteine 101/cysteine 180. A helical membrane pass occupies residues 26 to 55 (YIFVMIPTLYSIIFVVGIFGNSLVVIVIYF). The Cytoplasmic segment spans residues 56–61 (YMKLKT). A helical membrane pass occupies residues 62–89 (VASVFLLNLALADLCFLLTLPLWAVYTA). Over 90–98 (MEYRWPFGN) the chain is Extracellular. A helical transmembrane segment spans residues 99 to 125 (YLCKIASASVSFNLYASVFLLTCLSID). The Cytoplasmic segment spans residues 126–141 (RYVAIVHPMKSPVRRT). Residues 142 to 165 (MLMAKVTCIIIWLLAGLASLPTII) form a helical membrane-spanning segment. Residues 166 to 190 (HRNVFFIENTNITVCAFHYESQNST) lie on the Extracellular side of the membrane. Arginine 167 contributes to the angiotensin II binding site. Asparagine 176 is a glycosylation site (N-linked (GlcNAc...) asparagine). Angiotensin II is bound by residues phenylalanine 182, histidine 183, and tyrosine 184. N-linked (GlcNAc...) asparagine glycosylation is present at asparagine 188. The helical transmembrane segment at 191-216 (LPIGLGLTKNILGFLFPFLIILTSYT) threads the bilayer. Angiotensin II is bound at residue lysine 199. Over 217 to 239 (LIWKTLKRAYEIQKNKPRNDDIF) the chain is Cytoplasmic. The chain crosses the membrane as a helical span at residues 240–268 (KIIMAIVLFFFFSWVPHQIFTFLDVLIQL). The Extracellular portion of the chain corresponds to 269-278 (GIIHDCKIAD). A helical membrane pass occupies residues 279–304 (IVDTAMPITICIAYFNNCLNPLFYGF). Residues 305-359 (LGKKFKKYFLQLLKYIPPKAKSHSSLSTKMSTLSYRPSDHGNASTKKSASCVEVE) are Cytoplasmic-facing. Residues 335–352 (STLSYRPSDHGNASTKKS) show a composition bias toward polar residues. The disordered stretch occupies residues 335-359 (STLSYRPSDHGNASTKKSASCVEVE). Cysteine 355 carries S-palmitoyl cysteine lipidation.

The protein belongs to the G-protein coupled receptor 1 family. Interacts with MAS1. Interacts with ARRB1. Interacts with FLNA (via filamin repeat 21); increases PKA-mediated phosphorylation of FLNA. Post-translationally, C-terminal Ser or Thr residues may be phosphorylated. Adrenal, liver, aorta, kidney, lung, testis and heart.

It localises to the cell membrane. In terms of biological role, receptor for angiotensin II, a vasoconstricting peptide, which acts as a key regulator of blood pressure and sodium retention by the kidney. The activated receptor in turn couples to G-alpha proteins G(q) (GNAQ, GNA11, GNA14 or GNA15) and thus activates phospholipase C and increases the cytosolic Ca(2+) concentrations, which in turn triggers cellular responses such as stimulation of protein kinase C. The polypeptide is Type-1 angiotensin II receptor (AGTR1) (Canis lupus familiaris (Dog)).